Reading from the N-terminus, the 175-residue chain is ATP synthase subunit d, mitochondrial (175 aa).

The residue at position 2 (serine 2) is an N-acetylserine.

F-type ATP synthases have 2 components, the catalytic core F(1) and the membrane-embedded component F(0), linked together by a central stalk and a peripheral stalk. The central stalk, also called rotor shaft, is often seen as part of F(1). The peripheral stalk is seen as part of F(0). F(0) contains the membrane channel next to the rotor. F-type ATP synthases form dimers but each monomer functions independently in ATP generation. The dimer consists of 18 different polypeptides: ATP1 (subunit alpha, part of F(1), 3 molecules per monomer), ATP2 (subunit beta, part of F(1), 3 molecules per monomer), ATP3 (subunit gamma, part of the central stalk), ATP4 (subunit b, part of the peripheral stalk), ATP5/OSCP (subunit 5/OSCP, part of the peripheral stalk), ATP6 (subunit a, part of the peripheral stalk), ATP7 (subunit d, part of the peripheral stalk), ATP8 (subunit 8, part of the peripheral stalk), OLI1 (subunit c, part of the rotor, 10 molecules per monomer), ATP14 (subunit h, part of the peripheral stalk), ATP15 (subunit epsilon, part of the central stalk), ATP16 (subunit delta, part of the central stalk), ATP17 (subunit f, part of the peripheral stalk), ATP18 (subunit i/j, part of the peripheral stalk). Dimer-specific subunits are ATP19 (subunit k, at interface between monomers), ATP20 (subunit g, at interface between monomers), TIM11 (subunit e, at interface between monomers). Also contains subunit L.

The protein resides in the mitochondrion inner membrane. Its function is as follows. Mitochondrial membrane ATP synthase (F(1)F(0) ATP synthase or Complex V) produces ATP from ADP in the presence of a proton gradient across the membrane which is generated by electron transport complexes of the respiratory chain. F-type ATP synthases consist of two structural domains, F(1) - containing the extramembraneous catalytic core, and F(0) - containing the membrane proton channel, linked together by a central stalk and a peripheral stalk. During catalysis, ATP synthesis in the catalytic domain of F(1) is coupled via a rotary mechanism of the central stalk subunits to proton translocation. Part of the complex F(0) domain and the peripheral stalk, which acts as a stator to hold the catalytic alpha/ATP1(3)beta/ATP2(3) subcomplex and subunit a/ATP6 static relative to the rotary elements. This is ATP synthase subunit d, mitochondrial from Pichia angusta (Yeast).